A 468-amino-acid polypeptide reads, in one-letter code: MRISQLEGKTVALWGWGREGRAAYRALRTRLPTQALTVFCNAEEAREIDALEDAALQVETAASAQALGRFEIVVKSPGISPYRAEALVAAAQGTCFIGGTALWFAEHAQADGSVPGVICVTGTKGKSTTTALLAHLLRAAGHRTALVGNIGQPLLEVLAPQPPPAYWAIELSSYQTGDVGRSGARPELALVLNLFPEHLDWHGDEARYVRDKLSLVTEGRPRIALLNAADPLLAGLQLPDSQVRWFNHSAGWHLRGDVVYRGEQAIFDTADVPLPGEHNRRNLCAVLAAVEALGLDAAALAPAAASFRPLPNRLQLLGSVDGISYVNDSISTTPHASLAALACFAQRRVALLVGGHDRGLDWHDFAQQMARQAPLEIVTMGANGPRIHALLAPLAEAGHFGLHAANDLEHAMGLARAALGQQGGVVLLSPGAPSFGAYSDYVARGRHFAQLAGFDPAAISAIDGLGVH.

ATP is bound at residue 122–128 (GTKGKST).

Belongs to the MurCDEF family. MurD2 subfamily.

It is found in the cytoplasm. It carries out the reaction UDP-N-acetyl-alpha-D-muramoyl-L-alanine + L-glutamate + ATP = UDP-N-acetyl-alpha-D-muramoyl-L-alanyl-L-glutamate + ADP + phosphate + H(+). It participates in cell wall biogenesis; peptidoglycan biosynthesis. Functionally, cell wall formation. Catalyzes the addition of L-glutamate to the nucleotide precursor UDP-N-acetylmuramoyl-L-alanine. This is UDP-N-acetylmuramoyl-L-alanine--L-glutamate ligase from Xanthomonas euvesicatoria pv. vesicatoria (strain 85-10) (Xanthomonas campestris pv. vesicatoria).